Here is a 918-residue protein sequence, read N- to C-terminus: Rap guanine nucleotide exchange factor 3 (918 aa).

Ser79 carries the post-translational modification Phosphoserine. A DEP domain is found at 110–186 (ATYPTLIRDR…RDAQFYRFPG (77 aa)). The interaction with PDE3B stretch occupies residues 218 to 242 (TVALRKPPGQRTDEELDLIFEELLH). Residues 311–314 (GQLA) and 321–322 (RA) contribute to the 3',5'-cyclic AMP site. Positions 369–388 (TSQGAGPSRPPTPGRNRYTV) are disordered. One can recognise an N-terminal Ras-GEF domain in the interval 384–521 (NRYTVMSGTP…EQYPERRRHH (138 aa)). The interval 398 to 422 (ELLLEAMRPDSSAHDPTETFLSDFL) is interaction with PDE3B. Residues Ser531 and Ser859 each carry the phosphoserine modification. The region spanning 665–884 (SAKDLAGQLT…SRISTCSEQS (220 aa)) is the Ras-GEF domain.

As to quaternary structure, interacts with PDE3B and PIK3R6; form a signaling complex that regulates phosphatidylinositol 3-kinase gamma in angiogenesis.

It is found in the cytoplasm. Its subcellular location is the membrane. Guanine nucleotide exchange factor (GEF) for RAP1A and RAP2A small GTPases that is activated by binding cAMP. Through simultaneous binding of PDE3B to RAPGEF3 and PIK3R6 is assembled in a signaling complex in which it activates the PI3K gamma complex and which is involved in angiogenesis. Plays a role in the modulation of the cAMP-induced dynamic control of endothelial barrier function through a pathway that is independent on Rho-mediated signaling. Required for the actin rearrangement at cell-cell junctions, such as stress fibers and junctional actin. This Mus musculus (Mouse) protein is Rap guanine nucleotide exchange factor 3 (Rapgef3).